The chain runs to 426 residues: GTPase Obg (426 aa).

The 158-residue stretch at 1 to 158 folds into the Obg domain; the sequence is MFVDEVEIKV…RSIRLELKLV (158 aa). One can recognise an OBG-type G domain in the interval 159-330; that stretch reads ADVGLIGFPN…LIYYTGDLLK (172 aa). GTP contacts are provided by residues 165–172, 190–194, 212–215, 282–285, and 311–313; these read GFPNVGKS, FTTLK, DIPG, NKID, and SAA. Ser-172 and Thr-192 together coordinate Mg(2+). In terms of domain architecture, OCT spans 349-426; sequence DFADEEENIV…IGPMEFEYME (78 aa).

Belongs to the TRAFAC class OBG-HflX-like GTPase superfamily. OBG GTPase family. As to quaternary structure, monomer. It depends on Mg(2+) as a cofactor.

Its subcellular location is the cytoplasm. In terms of biological role, an essential GTPase which binds GTP, GDP and possibly (p)ppGpp with moderate affinity, with high nucleotide exchange rates and a fairly low GTP hydrolysis rate. Plays a role in control of the cell cycle, stress response, ribosome biogenesis and in those bacteria that undergo differentiation, in morphogenesis control. The protein is GTPase Obg of Halothermothrix orenii (strain H 168 / OCM 544 / DSM 9562).